The sequence spans 339 residues: Trace amine-associated receptor 2 (339 aa).

Over 1 to 36 the chain is Extracellular; the sequence is MTSFEAQQETFDCSEYGNGSCPENERSLGVRAAMYS. The N-linked (GlcNAc...) asparagine glycan is linked to N18. Cystine bridges form between C21/C185 and C104/C189. A helical transmembrane segment spans residues 37-57; the sequence is LMAGAIFITIFGNLVMIISIS. Residues 58–67 lie on the Cytoplasmic side of the membrane; that stretch reads YFKQLHTPTN. A helical membrane pass occupies residues 68–88; sequence LLILSMAVTDFLLGFTIMPYS. Topologically, residues 89 to 106 are extracellular; sequence MVRSVENCWYFGLTFCKI. The helical transmembrane segment at 107 to 127 threads the bilayer; it reads HYSFDLMLSITSIFHLCSVAI. Residues 128-150 lie on the Cytoplasmic side of the membrane; that stretch reads DRFYAICHPLHYCTKMTIPVVKR. Residues 151–171 traverse the membrane as a helical segment; the sequence is LLLVCWSVPGAFAFGVVFSEA. At 172–195 the chain is on the extracellular side; it reads YADGIEGYDILVACSSSCPVMFNK. A helical transmembrane segment spans residues 196-216; sequence LWGTTLFVAGFFTPSSMMVGI. The Cytoplasmic segment spans residues 217–251; it reads YGKIFAVSKKHARVIDNLPENQNNQMRKDKKAAKT. A helical membrane pass occupies residues 252–272; the sequence is LGIVMGVFLLCWFPCFFTILL. Over 273 to 287 the chain is Extracellular; sequence DPFLNFSTPAILFDA. Residue N277 is glycosylated (N-linked (GlcNAc...) asparagine). The chain crosses the membrane as a helical span at residues 288–310; the sequence is LTWFGYFNSTCNPLIYGFFYPWF. Over 311-339 the chain is Cytoplasmic; that stretch reads RRALRYILLGKIFSSHFHNTNLFTQKETE.

This sequence belongs to the G-protein coupled receptor 1 family.

The protein localises to the cell membrane. Functionally, orphan olfactory receptor specific for trace amines. Trace amine compounds are enriched in animal body fluids and act on trace amine-associated receptors (TAARs) to elicit both intraspecific and interspecific innate behaviors. Ligand-binding causes a conformation change that triggers signaling via the G(s)-class of G-proteins which activate adenylate cyclase. May also be required to provide olfactory input into limbic brain areas to regulate emotional behaviors likely via modulation of the dopamine system. The sequence is that of Trace amine-associated receptor 2 (Taar2) from Rattus norvegicus (Rat).